The chain runs to 351 residues: UDP-N-acetylenolpyruvoylglucosamine reductase (351 aa).

The FAD-binding PCMH-type domain maps to 25–196 (HIQAQARWLL…AAVEFRLPLL (172 aa)). Arg-173 is an active-site residue. The active-site Proton donor is Ser-246. The active site involves Glu-343.

The protein belongs to the MurB family. FAD serves as cofactor.

The protein localises to the cytoplasm. It catalyses the reaction UDP-N-acetyl-alpha-D-muramate + NADP(+) = UDP-N-acetyl-3-O-(1-carboxyvinyl)-alpha-D-glucosamine + NADPH + H(+). It participates in cell wall biogenesis; peptidoglycan biosynthesis. Cell wall formation. This Xylella fastidiosa (strain 9a5c) protein is UDP-N-acetylenolpyruvoylglucosamine reductase.